Reading from the N-terminus, the 413-residue chain is Peptidase T (413 aa).

Residue His-81 coordinates Zn(2+). Asp-83 is an active-site residue. Asp-143 provides a ligand contact to Zn(2+). The active-site Proton acceptor is the Glu-178. The Zn(2+) site is built by Glu-179, Asp-201, and His-383.

It belongs to the peptidase M20B family. The cofactor is Zn(2+).

The protein resides in the cytoplasm. The catalysed reaction is Release of the N-terminal residue from a tripeptide.. Functionally, cleaves the N-terminal amino acid of tripeptides. The protein is Peptidase T of Lactococcus lactis subsp. cremoris (Streptococcus cremoris).